The primary structure comprises 555 residues: Glucose-6-phosphate isomerase (555 aa).

Catalysis depends on Glu353, which acts as the Proton donor. Residues His384 and Lys516 contribute to the active site.

It belongs to the GPI family.

It localises to the cytoplasm. It carries out the reaction alpha-D-glucose 6-phosphate = beta-D-fructose 6-phosphate. It participates in carbohydrate biosynthesis; gluconeogenesis. It functions in the pathway carbohydrate degradation; glycolysis; D-glyceraldehyde 3-phosphate and glycerone phosphate from D-glucose: step 2/4. Its function is as follows. Catalyzes the reversible isomerization of glucose-6-phosphate to fructose-6-phosphate. This is Glucose-6-phosphate isomerase from Methylobacillus flagellatus (strain ATCC 51484 / DSM 6875 / VKM B-1610 / KT).